The primary structure comprises 71 residues: Sec-independent protein translocase protein TatA (71 aa).

Residues 9–29 (LLLILAIVVILFGASRLPALG) form a helical membrane-spanning segment. The disordered stretch occupies residues 43 to 71 (FGGEDEKPTASGNGSTPTQSSSDQGSKQA). A compositionally biased stretch (polar residues) spans 52–71 (ASGNGSTPTQSSSDQGSKQA).

Belongs to the TatA/E family. As to quaternary structure, the Tat system comprises two distinct complexes: a TatABC complex, containing multiple copies of TatA, TatB and TatC subunits, and a separate TatA complex, containing only TatA subunits. Substrates initially bind to the TatABC complex, which probably triggers association of the separate TatA complex to form the active translocon.

It is found in the cell inner membrane. Part of the twin-arginine translocation (Tat) system that transports large folded proteins containing a characteristic twin-arginine motif in their signal peptide across membranes. TatA could form the protein-conducting channel of the Tat system. The chain is Sec-independent protein translocase protein TatA from Anaeromyxobacter dehalogenans (strain 2CP-C).